Here is a 226-residue protein sequence, read N- to C-terminus: MIHLVDYALLKPYLTVDEAVAGARKAEELGVAAYCVNPIYAPVVRPLLRKVKLCVVADFPFGALPTASRIALVSRLAEVADEIDVVAPIGLVKSRRWAEVRRDLISVVGAAGGRVVKVITEEPYLRDEERYTLYDIIAEAGAHFIKSSTGFAEEAYAARQGNPVHSTPERAAAIARYIKEKGYRLGVKMAGGIRTREQAKAIVDAIGWGEDPARVRLGTSTPEALL.

The Proton donor/acceptor role is filled by D84. K146 functions as the Schiff-base intermediate with acetaldehyde in the catalytic mechanism. The Proton donor/acceptor role is filled by K188.

It belongs to the DeoC/FbaB aldolase family. DeoC type 1 subfamily. In terms of assembly, homodimer.

The protein localises to the cytoplasm. It catalyses the reaction 2-deoxy-D-ribose 5-phosphate = D-glyceraldehyde 3-phosphate + acetaldehyde. It functions in the pathway carbohydrate degradation; 2-deoxy-D-ribose 1-phosphate degradation; D-glyceraldehyde 3-phosphate and acetaldehyde from 2-deoxy-alpha-D-ribose 1-phosphate: step 2/2. Its function is as follows. Catalyzes a reversible aldol reaction between acetaldehyde and D-glyceraldehyde 3-phosphate to generate 2-deoxy-D-ribose 5-phosphate. The sequence is that of Deoxyribose-phosphate aldolase from Pyrobaculum aerophilum (strain ATCC 51768 / DSM 7523 / JCM 9630 / CIP 104966 / NBRC 100827 / IM2).